Reading from the N-terminus, the 315-residue chain is CRISPR-associated endonuclease Cas1 1 (315 aa).

Mn(2+)-binding residues include Glu-144, His-208, and Glu-223.

The protein belongs to the CRISPR-associated endonuclease Cas1 family. In terms of assembly, homodimer, forms a heterotetramer with a Cas2 homodimer. It depends on Mg(2+) as a cofactor. Mn(2+) is required as a cofactor.

Its function is as follows. CRISPR (clustered regularly interspaced short palindromic repeat), is an adaptive immune system that provides protection against mobile genetic elements (viruses, transposable elements and conjugative plasmids). CRISPR clusters contain spacers, sequences complementary to antecedent mobile elements, and target invading nucleic acids. CRISPR clusters are transcribed and processed into CRISPR RNA (crRNA). Acts as a dsDNA endonuclease. Involved in the integration of spacer DNA into the CRISPR cassette. The sequence is that of CRISPR-associated endonuclease Cas1 1 from Thermus thermophilus (strain ATCC 27634 / DSM 579 / HB8).